Here is an 88-residue protein sequence, read N- to C-terminus: M-zodatoxin-Lt1a (88 aa).

The first 22 residues, 1-22 (MKYFVVALALAVALVCIAESTA), serve as a signal peptide directing secretion. Residues 23–62 (YDVNEELENELDDLSDAAWLAKAAEDLQALDDFEESEESR) constitute a propeptide that is removed on maturation. The Processing quadruplet motif motif lies at 59–62 (EESR).

In terms of processing, cleavage of the propeptide depends on the processing quadruplet motif (XXXR, with at least one of X being E). As to expression, expressed by the venom gland.

Its subcellular location is the secreted. Has antimicrobial activity against Gram-positive bacteria (A.globiformis VKM Ac-1112 (MIC=0.5 uM), and B.subtilis VKM B-501 (MIC=1.0 uM)), Gram-negative bacteria (E.coli DH5-alpha (MIC=1.0 uM), E.coli MH1 (MIC=0.7 uM), and P.aeruginosa PAO1 (MIC=4.1 uM)), and yeasts (P.pastoris GS115 (MIC=17 uM), and S.cerevisiae Y190 (MIC&gt;33 uM)). Has a moderate hemolytic activity against rabbit erythrocytes. Causes paralysis, but is not lethal when injected into insect (M.domestica) larvae. This Lachesana tarabaevi (Spider) protein is M-zodatoxin-Lt1a.